Here is a 254-residue protein sequence, read N- to C-terminus: Low affinity immunoglobulin gamma Fc region receptor III-A (254 aa).

A signal peptide spans 1-20 (MWQLLLPTALLLLVSAGMRA). 2 consecutive Ig-like C2-type domains span residues 24-105 (PKAV…LEVH) and 107-189 (GWLL…VNIT). 2 disulfides stabilise this stretch: Cys47–Cys89 and Cys128–Cys172. The N-linked (GlcNAc...) asparagine glycan is linked to Asn187. Residues 207 to 229 (YQVSFCLVMVLLFAVDTGLYFSV) traverse the membrane as a helical segment. A disordered region spans residues 234–254 (PSSTSDWKDHKFKWSKDPQDK). Positions 239–254 (DWKDHKFKWSKDPQDK) are enriched in basic and acidic residues.

As to quaternary structure, forms a heterooligomeric complex with ITAM-containing signaling subunits, either a homodimer of CD247, a homodimer of FCER1G or a heterodimer of CD247 and FCER1G, to form a functional receptor complex. Interacts (via transmembrane domain) with signaling subunits; this interaction is a prerequisite for receptor complex expression on the cell surface and intracellular signal transduction. Binds the Fc region of antigen-complexed IgG with a preference for IgG1 and IgG3 isotypes. Interacts with CD2; this interaction is involved in NK cell activation and cytotoxicity. Interacts with S100A4; this interaction inhibits PKC-dependent phosphorylation of FCGR3A. Glycosylated. Glycosylation plays an inhibitory role in the interaction with IgG1 and IgG2. In terms of processing, undergoes rapid ectodomain shedding upon NK cell stimulation. The soluble form is produced by a proteolytic cleavage mediated by ADAM17. Repeated stimulation causes receptor shedding, a mechanism that allows for increased NK cell motility and detachment from opsonized target cells while avoiding activation-induced NK cell apoptosis. In terms of tissue distribution, lymphocytes and monocytes.

The protein localises to the cell membrane. The protein resides in the secreted. Receptor for the invariable Fc fragment of immunoglobulin gamma (IgG). Optimally activated upon binding of clustered antigen-IgG complexes displayed on cell surfaces, triggers lysis of antibody-coated cells, a process known as antibody-dependent cellular cytotoxicity (ADCC). Does not bind free monomeric IgG, thus avoiding inappropriate effector cell activation in the absence of antigenic trigger. Mediates IgG effector functions on natural killer (NK) cells. Binds antigen-IgG complexes generated upon infection and triggers NK cell-dependent cytokine production and degranulation to limit viral load and propagation. Involved in the generation of memory-like adaptive NK cells capable to produce high amounts of IFNG and to efficiently eliminate virus-infected cells via ADCC. Regulates NK cell survival and proliferation, in particular by preventing NK cell progenitor apoptosis. Fc-binding subunit that associates with CD247 and/or FCER1G adapters to form functional signaling complexes. Following the engagement of antigen-IgG complexes, triggers phosphorylation of immunoreceptor tyrosine-based activation motif (ITAM)-containing adapters with subsequent activation of phosphatidylinositol 3-kinase signaling and sustained elevation of intracellular calcium that ultimately drive NK cell activation. The ITAM-dependent signaling coupled to receptor phosphorylation by PKC mediates robust intracellular calcium flux that leads to production of pro-inflammatory cytokines, whereas in the absence of receptor phosphorylation it mainly activates phosphatidylinositol 3-kinase signaling leading to cell degranulation. Costimulates NK cells and trigger lysis of target cells independently of IgG binding. Mediates the antitumor activities of therapeutic antibodies. Upon ligation on monocytes triggers TNFA-dependent ADCC of IgG-coated tumor cells. Mediates enhanced ADCC in response to afucosylated IgGs. In Papio anubis (Olive baboon), this protein is Low affinity immunoglobulin gamma Fc region receptor III-A (FCGR3A).